The primary structure comprises 157 residues: Lectin (157 aa).

Cysteine 37 and cysteine 54 are oxidised to a cystine.

As to quaternary structure, homodimer. As to expression, detected in fruits (at protein level).

It is found in the secreted. Functionally, binds with high affinity specifically to chito-oligosaccharides. May play a role in plant defense against pathogens by directly binding with the chitin cell wall. Forms filamentous structures at higher concentrations and may promote wound healing by forming filaments with phloem proteins like PP1. This chain is Lectin, found in Coccinia grandis (Ivy gourd).